The primary structure comprises 105 residues: UPF0145 protein CPS_2458 (105 aa).

It belongs to the UPF0145 family.

The chain is UPF0145 protein CPS_2458 from Colwellia psychrerythraea (strain 34H / ATCC BAA-681) (Vibrio psychroerythus).